The following is a 295-amino-acid chain: Virginiamycin B lyase (295 aa).

Histidine 228 provides a ligand contact to substrate. Glutamate 268 contacts Mg(2+). The Proton acceptor role is filled by histidine 270. Glutamate 285 is a binding site for Mg(2+).

The protein belongs to the Vgb family. In terms of assembly, monomer. It depends on Mg(2+) as a cofactor.

Functionally, inactivates the type B streptogramin antibiotics by linearizing the lactone ring at the ester linkage, generating a free phenylglycine carboxylate and converting the threonyl moiety into 2-amino-butenoic acid. The sequence is that of Virginiamycin B lyase from Clostridium beijerinckii (strain ATCC 51743 / NCIMB 8052) (Clostridium acetobutylicum).